The following is a 400-amino-acid chain: Protein phosphatase methylesterase 1 (400 aa).

A disordered region spans residues 32–70 (DENDGDALGSLPSFNGQSNRNRKYTGKTGSTTDRISSKE). In terms of domain architecture, AB hydrolase-1 spans 114–365 (PIFIFHHGAG…DSGHFIQEDS (252 aa)). Catalysis depends on residues Ser-205, Asp-233, and His-359.

Belongs to the AB hydrolase superfamily. In terms of assembly, interacts with and inactivates the phosphatase PP2A-like catalytic subunits PPG1, PPH21, PPH22, PPH3 and SIT4.

It catalyses the reaction [phosphatase 2A protein]-C-terminal L-leucine methyl ester + H2O = [phosphatase 2A protein]-C-terminal L-leucine + methanol + H(+). Functionally, demethylates proteins that have been reversibly carboxymethylated. Demethylates the phosphatase PP2A catalytic subunits PPH21 and PPH22. Forms inactive complexes (PP2Ai) with phosphatase PP2A-like catalytic subunits. Involved in the regulation of cell cycle progression at START. This is Protein phosphatase methylesterase 1 (PPE1) from Saccharomyces cerevisiae (strain ATCC 204508 / S288c) (Baker's yeast).